The sequence spans 234 residues: Ribosome maturation protein SDO1 homolog (234 aa).

The protein belongs to the SDO1/SBDS family.

This is Ribosome maturation protein SDO1 homolog from Archaeoglobus fulgidus (strain ATCC 49558 / DSM 4304 / JCM 9628 / NBRC 100126 / VC-16).